The following is a 525-amino-acid chain: DEAD-box ATP-dependent RNA helicase CshA (525 aa).

Residues 2 to 30 (TTFRELGLSDSLLQSVESMGFEEATPIQA) carry the Q motif motif. Positions 33 to 203 (IPHALQGKDI…ERFMTEPQHI (171 aa)) constitute a Helicase ATP-binding domain. 46 to 53 (AQTGTGKT) is an ATP binding site. The short motif at 151–154 (DEAD) is the DEAD box element. The Helicase C-terminal domain occupies 214 to 374 (NIQQFYLEVQ…RMDAPTLDEA (161 aa)). The segment at 428 to 525 (TTPIALTSEP…RKHHSRKPQA (98 aa)) is disordered. Positions 458 to 503 (DGNRNRSRDGRGGDGRNRDRNRDGRNRDGNRDRNRDGGNRGRRGEG) are enriched in basic and acidic residues. The segment covering 515–525 (ERKHHSRKPQA) has biased composition (basic residues).

The protein belongs to the DEAD box helicase family. CshA subfamily. As to quaternary structure, oligomerizes, may be a member of the RNA degradosome.

Its subcellular location is the cytoplasm. The enzyme catalyses ATP + H2O = ADP + phosphate + H(+). Its function is as follows. DEAD-box RNA helicase possibly involved in RNA degradation. Unwinds dsRNA in both 5'- and 3'-directions, has RNA-dependent ATPase activity. This chain is DEAD-box ATP-dependent RNA helicase CshA, found in Bacillus cereus (strain ATCC 10987 / NRS 248).